The following is a 255-amino-acid chain: Hydroxyacylglutathione hydrolase (255 aa).

The Zn(2+) site is built by His55, His57, Asp59, His60, His113, Asp132, and His170.

The protein belongs to the metallo-beta-lactamase superfamily. Glyoxalase II family. As to quaternary structure, monomer. Zn(2+) serves as cofactor.

The enzyme catalyses an S-(2-hydroxyacyl)glutathione + H2O = a 2-hydroxy carboxylate + glutathione + H(+). It participates in secondary metabolite metabolism; methylglyoxal degradation; (R)-lactate from methylglyoxal: step 2/2. Thiolesterase that catalyzes the hydrolysis of S-D-lactoyl-glutathione to form glutathione and D-lactic acid. In Methylobacterium sp. (strain 4-46), this protein is Hydroxyacylglutathione hydrolase.